The sequence spans 189 residues: Potassium-transporting ATPase KdpC subunit (189 aa).

The chain crosses the membrane as a helical span at residues 10–30 (VIFAMLTLICGVIYPYAITGI).

Belongs to the KdpC family. As to quaternary structure, the system is composed of three essential subunits: KdpA, KdpB and KdpC.

Its subcellular location is the cell inner membrane. Functionally, part of the high-affinity ATP-driven potassium transport (or Kdp) system, which catalyzes the hydrolysis of ATP coupled with the electrogenic transport of potassium into the cytoplasm. This subunit acts as a catalytic chaperone that increases the ATP-binding affinity of the ATP-hydrolyzing subunit KdpB by the formation of a transient KdpB/KdpC/ATP ternary complex. In Janthinobacterium sp. (strain Marseille) (Minibacterium massiliensis), this protein is Potassium-transporting ATPase KdpC subunit.